The chain runs to 399 residues: L-asparaginase-like protein GE13669 (399 aa).

An N-terminal signal peptide occupies residues 1-22 (MLAQSCCLRLLILLLLFKSTCS). 3 cysteine pairs are disulfide-bonded: Cys-90-Cys-95, Cys-189-Cys-205, and Cys-344-Cys-371.

Belongs to the Ntn-hydrolase family.

The protein is L-asparaginase-like protein GE13669 of Drosophila yakuba (Fruit fly).